Consider the following 172-residue polypeptide: Large ribosomal subunit protein uL10 (172 aa).

Belongs to the universal ribosomal protein uL10 family. As to quaternary structure, part of the ribosomal stalk of the 50S ribosomal subunit. The N-terminus interacts with L11 and the large rRNA to form the base of the stalk. The C-terminus forms an elongated spine to which L12 dimers bind in a sequential fashion forming a multimeric L10(L12)X complex.

Forms part of the ribosomal stalk, playing a central role in the interaction of the ribosome with GTP-bound translation factors. The protein is Large ribosomal subunit protein uL10 of Bartonella henselae (strain ATCC 49882 / DSM 28221 / CCUG 30454 / Houston 1) (Rochalimaea henselae).